The chain runs to 351 residues: Ion-translocating oxidoreductase complex subunit D (351 aa).

4 helical membrane passes run 18–38 (IMLL…YFFG), 40–60 (GSLI…GAVL), 87–107 (LPPL…IVIA), and 121–141 (PAMV…TSWL). Threonine 185 bears the FMN phosphoryl threonine mark. Transmembrane regions (helical) follow at residues 211–231 (VLAG…GLLL), 241–261 (IPVS…MIAP), 264–284 (FASP…FFIA), 298–318 (LIFG…GGYP), and 321–341 (VAFA…YTQP).

This sequence belongs to the NqrB/RnfD family. In terms of assembly, the complex is composed of six subunits: RnfA, RnfB, RnfC, RnfD, RnfE and RnfG. FMN is required as a cofactor.

The protein localises to the cell inner membrane. Functionally, part of a membrane-bound complex that couples electron transfer with translocation of ions across the membrane. The sequence is that of Ion-translocating oxidoreductase complex subunit D from Yersinia pestis.